The following is a 1429-amino-acid chain: Dicer-like protein 2 (1429 aa).

Residues 21-200 (MFEASLKGNI…TIEMNLNSVC (180 aa)) form the Helicase ATP-binding domain. 34-41 (MGTGSGKT) is an ATP binding site. The short motif at 141–144 (DEAH) is the DEAH box element. Residues 335 to 501 (ALISFLMSTE…EDRRRTEELR (167 aa)) enclose the Helicase C-terminal domain. A Dicer dsRNA-binding fold domain is found at 528–622 (AMQHLVHFCD…LPLTKSREFT (95 aa)). RNase III domains are found at residues 874-1014 (ATRL…IDGG) and 1056-1250 (QENL…VDSG). Mg(2+) is bound by residues Glu1095, Asp1236, and Glu1239.

Belongs to the helicase family. Dicer subfamily. Requires Mg(2+) as cofactor. Mn(2+) is required as a cofactor.

In terms of biological role, dicer-like endonuclease involved in cleaving double-stranded RNA in the RNA interference (RNAi) pathway. Produces 21 to 25 bp dsRNAs (siRNAs) which target the selective destruction of homologous RNAs leading to sequence-specific suppression of gene expression, called post-transcriptional gene silencing (PTGS). Part of a broad host defense response against viral infection and transposons. In Emericella nidulans (strain FGSC A4 / ATCC 38163 / CBS 112.46 / NRRL 194 / M139) (Aspergillus nidulans), this protein is Dicer-like protein 2 (dcl2).